The primary structure comprises 142 residues: Large ribosomal subunit protein uL13 (142 aa).

This sequence belongs to the universal ribosomal protein uL13 family. In terms of assembly, part of the 50S ribosomal subunit.

This protein is one of the early assembly proteins of the 50S ribosomal subunit, although it is not seen to bind rRNA by itself. It is important during the early stages of 50S assembly. This chain is Large ribosomal subunit protein uL13, found in Ruthia magnifica subsp. Calyptogena magnifica.